Reading from the N-terminus, the 207-residue chain is Protein 6b (207 aa).

The segment at 160–183 (GNYTEEGEDDDDEMDDEGEAGGAE) is disordered. A compositionally biased stretch (acidic residues) spans 164–178 (EEGEDDDDEMDDEGE).

Its function is as follows. Involved in tumor formation and increases auxin and cytokinin effects in host plants. The protein is Protein 6b (6b) of Agrobacterium tumefaciens (strain Ach5).